Reading from the N-terminus, the 313-residue chain is Protein TIC 22-like, chloroplastic (313 aa).

The transit peptide at 1-96 (MNSNIFPPSK…RISDDGGGAR (96 aa)) directs the protein to the chloroplast.

Belongs to the Tic22 family.

It is found in the plastid. The protein localises to the chloroplast intermembrane space. Its function is as follows. Involved in protein precursor import into chloroplasts. This Arabidopsis thaliana (Mouse-ear cress) protein is Protein TIC 22-like, chloroplastic (TIC22L).